We begin with the raw amino-acid sequence, 914 residues long: UPF0182 protein Syncc9605_1323 (914 aa).

9 consecutive transmembrane segments (helical) span residues 4 to 24, 37 to 57, 81 to 101, 123 to 143, 152 to 172, 195 to 215, 240 to 260, 285 to 305, and 312 to 332; these read LLLLLPLVVVAARMQIEWLWF, WLLQVLLAGVAMLPLLAARAW, IALLICAVVVLISALLTLDLL, RIGSVVKLVQVGGIGLAMTWL, IVAASWVVVVSRTWGIWSLAL, FAGLHLALDLLLLGATFTLVF, MRLIRLLSALLLFGAAGLVWL, LPLRGFATLLLLLMGLALLLP, and QFLALALATLVMLETLATPLT.

The protein belongs to the UPF0182 family.

Its subcellular location is the cell membrane. In Synechococcus sp. (strain CC9605), this protein is UPF0182 protein Syncc9605_1323.